Consider the following 361-residue polypeptide: Phenylalanine 4-monooxygenase, chloroplastic (361 aa).

Residues 1 to 55 constitute a chloroplast transit peptide; the sequence is MLALRQGALLLSARGGQTTHDNLQLCAGPSRRPRARWISSAPRPSTLVERHIRPQ. The tract at residues 47 to 67 is disordered; it reads LVERHIRPQASTASDATTSTS. Low complexity predominate over residues 56-67; that stretch reads ASTASDATTSTS. Residues His227, His232, and Glu272 each coordinate Fe cation.

This sequence belongs to the biopterin-dependent aromatic amino acid hydroxylase family. It depends on Fe(2+) as a cofactor.

Its subcellular location is the plastid. It localises to the chloroplast. The enzyme catalyses (6R)-L-erythro-5,6,7,8-tetrahydrobiopterin + L-phenylalanine + O2 = (4aS,6R)-4a-hydroxy-L-erythro-5,6,7,8-tetrahydrobiopterin + L-tyrosine. Functionally, catalyzes the hydroxylation of L-phenylalanine to L-tyrosine. Can functionally complement an Escherichia coli tyrosine auxotroph. In Chlamydomonas reinhardtii (Chlamydomonas smithii), this protein is Phenylalanine 4-monooxygenase, chloroplastic.